A 450-amino-acid chain; its full sequence is Zinc finger protein 446 (450 aa).

Residues 26–108 (RLRFRGFCYQ…ALVEGLQHDP (83 aa)) form the SCAN box domain. K130 participates in a covalent cross-link: Glycyl lysine isopeptide (Lys-Gly) (interchain with G-Cter in SUMO2). Disordered regions lie at residues 130–155 (KTEE…QDTR) and 168–205 (EEPN…SFHP). At S137 the chain carries Phosphoserine. One can recognise a KRAB domain in the interval 208-254 (IQEEWGLLDRSQKELYWDAMLEKYGTVVSLGLPPHQPEAQAQSELGM). S218 is modified (phosphoserine). Disordered stretches follow at residues 263–331 (RSLR…PRKP) and 354–389 (HTSG…RRSL). The span at 275 to 286 (PGCPEAQPPQGP) shows a compositional bias: pro residues. Positions 287 to 306 (GPAAWEGLSGAATPAPTVRP) are enriched in low complexity. T308 bears the Phosphothreonine mark. A Glycyl lysine isopeptide (Lys-Gly) (interchain with G-Cter in SUMO2) cross-link involves residue K330. 3 consecutive C2H2-type zinc fingers follow at residues 332 to 359 (YTCE…SGPG), 395 to 422 (YPCE…GQRR), and 423 to 450 (HFCS…PEVP).

Belongs to the krueppel C2H2-type zinc-finger protein family.

Its subcellular location is the nucleus. May be involved in transcriptional regulation. The sequence is that of Zinc finger protein 446 (ZNF446) from Homo sapiens (Human).